The primary structure comprises 388 residues: Protein-glutamate methylesterase/protein-glutamine glutaminase (388 aa).

The Response regulatory domain maps to 20–138; the sequence is RVMVVDDSVV…ESAGAEVFRH (119 aa). Position 71 is a 4-aspartylphosphate (aspartate 71). The CheB-type methylesterase domain maps to 193 to 386; sequence PTAPRVLLIG…PKLVRLFSGD (194 aa). Residues serine 204, histidine 232, and aspartate 328 contribute to the active site.

The protein belongs to the CheB family. Phosphorylated by CheA. Phosphorylation of the N-terminal regulatory domain activates the methylesterase activity.

It localises to the cytoplasm. It catalyses the reaction [protein]-L-glutamate 5-O-methyl ester + H2O = L-glutamyl-[protein] + methanol + H(+). It carries out the reaction L-glutaminyl-[protein] + H2O = L-glutamyl-[protein] + NH4(+). In terms of biological role, involved in chemotaxis. Part of a chemotaxis signal transduction system that modulates chemotaxis in response to various stimuli. Catalyzes the demethylation of specific methylglutamate residues introduced into the chemoreceptors (methyl-accepting chemotaxis proteins or MCP) by CheR. Also mediates the irreversible deamidation of specific glutamine residues to glutamic acid. The polypeptide is Protein-glutamate methylesterase/protein-glutamine glutaminase (Rhodopseudomonas palustris (strain HaA2)).